Consider the following 433-residue polypeptide: Legumain (433 aa).

Positions 1 to 17 (MVWKVAVFLSVALGIGA) are cleaved as a signal peptide. The N-linked (GlcNAc...) asparagine glycan is linked to N91. Residue H148 is part of the active site. N167 carries an N-linked (GlcNAc...) asparagine glycan. C189 functions as the Nucleophile in the catalytic mechanism. N263 and N272 each carry an N-linked (GlcNAc...) asparagine glycan. A propeptide spanning residues 324 to 433 (DLEESRQLTE…SMDHVCLGHY (110 aa)) is cleaved from the precursor. Cystine bridges form between C378-C412 and C390-C429.

The protein belongs to the peptidase C13 family. In terms of assembly, homodimer before autocatalytic removal of the propeptide. Monomer after autocatalytic processing. May interact with integrins. Post-translationally, activated by autocatalytic processing at pH 4. As to expression, ubiquitous. Particularly abundant in kidney, heart and placenta.

It localises to the lysosome. It carries out the reaction Hydrolysis of proteins and small molecule substrates at -Asn-|-Xaa- bonds.. With respect to regulation, inhibited by CST6. Has a strict specificity for hydrolysis of asparaginyl bonds. Can also cleave aspartyl bonds slowly, especially under acidic conditions. Involved in the processing of proteins for MHC class II antigen presentation in the lysosomal/endosomal system. Also involved in MHC class I antigen presentation in cross-presenting dendritic cells by mediating cleavage and maturation of Perforin-2 (MPEG1), thereby promoting antigen translocation in the cytosol. Required for normal lysosomal protein degradation in renal proximal tubules. Required for normal degradation of internalized EGFR. Plays a role in the regulation of cell proliferation via its role in EGFR degradation. This Homo sapiens (Human) protein is Legumain.